We begin with the raw amino-acid sequence, 709 residues long: Polyribonucleotide nucleotidyltransferase (709 aa).

Mg(2+) contacts are provided by D486 and D492. The KH domain occupies 553 to 612 (PRIHTIKINPDKIKDVIGKGGSVIRALTEETGTTIEIEDDGTVKIAATDGEKAKHAISRI). Positions 622 to 690 (GRIYAGKVTR…RQGRVRLSIK (69 aa)) constitute an S1 motif domain.

Belongs to the polyribonucleotide nucleotidyltransferase family. Component of the RNA degradosome, which is a multiprotein complex involved in RNA processing and mRNA degradation. The cofactor is Mg(2+).

The protein resides in the cytoplasm. The catalysed reaction is RNA(n+1) + phosphate = RNA(n) + a ribonucleoside 5'-diphosphate. Functionally, involved in mRNA degradation. Catalyzes the phosphorolysis of single-stranded polyribonucleotides processively in the 3'- to 5'-direction. This is Polyribonucleotide nucleotidyltransferase from Photorhabdus luminescens (Xenorhabdus luminescens).